The sequence spans 824 residues: LPS-assembly protein LptD (824 aa).

Disordered regions lie at residues 1-26 (MTEQ…RRVR) and 67-117 (TQTP…PAYV). Positions 1–48 (MTEQRRSPHHPATRPPAPPGTSRRVRLPASALRPLVLAMAGLTVSAHA) are cleaved as a signal peptide. A compositionally biased stretch (low complexity) spans 98 to 115 (NTLNLSPSSTPSNPNAPA).

The protein belongs to the LptD family. As to quaternary structure, component of the lipopolysaccharide transport and assembly complex. Interacts with LptE and LptA.

The protein localises to the cell outer membrane. Its function is as follows. Together with LptE, is involved in the assembly of lipopolysaccharide (LPS) at the surface of the outer membrane. This is LPS-assembly protein LptD from Cupriavidus metallidurans (strain ATCC 43123 / DSM 2839 / NBRC 102507 / CH34) (Ralstonia metallidurans).